The following is a 315-amino-acid chain: Methionyl-tRNA formyltransferase (315 aa).

113-116 (SLLP) is a (6S)-5,6,7,8-tetrahydrofolate binding site.

Belongs to the Fmt family.

The enzyme catalyses L-methionyl-tRNA(fMet) + (6R)-10-formyltetrahydrofolate = N-formyl-L-methionyl-tRNA(fMet) + (6S)-5,6,7,8-tetrahydrofolate + H(+). In terms of biological role, attaches a formyl group to the free amino group of methionyl-tRNA(fMet). The formyl group appears to play a dual role in the initiator identity of N-formylmethionyl-tRNA by promoting its recognition by IF2 and preventing the misappropriation of this tRNA by the elongation apparatus. The chain is Methionyl-tRNA formyltransferase from Escherichia coli O17:K52:H18 (strain UMN026 / ExPEC).